The sequence spans 81 residues: Elongation factor 1-beta (81 aa).

Belongs to the EF-1-beta/EF-1-delta family.

Its function is as follows. Promotes the exchange of GDP for GTP in EF-1-alpha/GDP, thus allowing the regeneration of EF-1-alpha/GTP that could then be used to form the ternary complex EF-1-alpha/GTP/AAtRNA. This chain is Elongation factor 1-beta, found in Nanoarchaeum equitans (strain Kin4-M).